Here is a 128-residue protein sequence, read N- to C-terminus: Large ribosomal subunit protein bL12 (128 aa).

It belongs to the bacterial ribosomal protein bL12 family. Homodimer. Part of the ribosomal stalk of the 50S ribosomal subunit. Forms a multimeric L10(L12)X complex, where L10 forms an elongated spine to which 2 to 4 L12 dimers bind in a sequential fashion. Binds GTP-bound translation factors.

Its function is as follows. Forms part of the ribosomal stalk which helps the ribosome interact with GTP-bound translation factors. Is thus essential for accurate translation. This chain is Large ribosomal subunit protein bL12, found in Halorhodospira halophila (strain DSM 244 / SL1) (Ectothiorhodospira halophila (strain DSM 244 / SL1)).